The following is a 716-amino-acid chain: ATP-dependent zinc metalloprotease FTSH 1, chloroplastic (716 aa).

A chloroplast-targeting transit peptide spans 1–48 (MASNSLLRSSSNFFLGSHIIISSPTPKTTRKPSFPFSFVSRAKYQITR). A thylakoid-targeting transit peptide spans 49–86 (SSQDENSPNGKPNSPFSSQVALAAILLSSISSSPLALA). The chain crosses the membrane as a helical span at residues 204–224 (FTVIGNLIFPLLAFGGLFLLF). 302-309 (GPPGTGKT) lines the ATP pocket. Histidine 524 contributes to the Zn(2+) binding site. Glutamate 525 is a catalytic residue. Zn(2+)-binding residues include histidine 528 and aspartate 605.

It in the N-terminal section; belongs to the AAA ATPase family. In the C-terminal section; belongs to the peptidase M41 family. In terms of assembly, interacts with CHIP and HSP70. Heterohexamers with FTSH2, FTSH5 and FTSH8. The cofactor is Zn(2+). In terms of processing, the FTSH1 precursor is ubiquitinated by CHIP in the cytoplasm. In terms of tissue distribution, ubiquitous.

Its subcellular location is the plastid. It is found in the chloroplast thylakoid membrane. Its function is as follows. Part of a complex that function as an ATP-dependent zinc metallopeptidase. Involved in the thylakoid formation and in the removal of damaged D1 in the photosystem II, preventing cell death under high-intensity light conditions. The polypeptide is ATP-dependent zinc metalloprotease FTSH 1, chloroplastic (FTSH1) (Arabidopsis thaliana (Mouse-ear cress)).